The chain runs to 150 residues: uncharacterized protein (150 aa).

The span at 1 to 19 shows a compositional bias: low complexity; that stretch reads MNDDSSSSSSGDSSDGSSG. Disordered regions lie at residues 1–21 and 85–131; these read MNDD…SGTT and EPEA…AYPE. The segment covering 106–115 has biased composition (pro residues); sequence RPPPTEPPTV.

This is an uncharacterized protein from Schizosaccharomyces pombe (strain 972 / ATCC 24843) (Fission yeast).